The primary structure comprises 778 residues: MGEEDTKVIVEPTANGTSSLQKTSDAISGKEVQENASGKEVQESKKEEDTGLEKMEIDDEGKQHEGESETGDKEVEVTEEEKKDVGEDKEQPEADKMDEDTDDKNLKADDGVSGVATEEDAVMKESVESADNKDAENPEGEQEKESKEEKLEGGKANGNEEGDTEEKLVGGDKGDDVDEAEKVENVDEDDKEEALKEKNEAELAEEEETNKGEEVKEANKEDDVEADTKVAEPEVEDKKTESKDENEDKEEEKEDEKEESMDDKEDEKEESNDDDKEDEKEESNDDKEDKKEDIKKSNKRGKGKTEKTRGKTKSDEEKKDIEPKTPFFSDRPVRERKSVERLVAVVDKDSSREFHVEKGKGTPLKDIPNVAYKVSRKKSDEVFKQLHTILFGGKRVKATQLKAHILRFSGYKWQGDEEKAKLKVKEKFEKINKEKLLEFCDLFDISVAKATTKKEDIVTKLVEFLEKPHATTDVLVNEKEKGVKRKRTPKKSSPAAGSSSSKRSAKSQKKTEEATRTNKKSVAHSDDESEEEKEDDEEEEKEQEVEEEEEENENGIPDKSEDEAPQLSESEENVESEEESEEETKKKKRGSRTSSDKKESAGKSRSKKTAVPTKSSPPKKATQKRSAGKRKKSDDDSDTSPKASSKRKKTEKPAKEQAAAPLKSVSKEKPVIGKRGGKGKDKNKEPSDEELKTAIIDILKGVDFNTATFTDILKRLDAKFNISLASKKSSIKRMIQDELTKLADEAEDEEGEEEDAEHEEEEEKEKAKGSGGGEEVKA.

Disordered stretches follow at residues 1-334 (MGEE…RPVR) and 475-689 (LVNE…PSDE). Polar residues predominate over residues 14 to 26 (ANGTSSLQKTSDA). Composition is skewed to basic and acidic residues over residues 40–95 (EVQE…PEAD), 121–153 (AVMK…KLEG), 165–185 (EEKL…KVEN), and 209–243 (TNKG…TESK). Residues 191–300 (KEEALKEKNE…KEDIKKSNKR (110 aa)) adopt a coiled-coil conformation. Residues 244 to 286 (DENEDKEEEKEDEKEESMDDKEDEKEESNDDDKEDEKEESNDD) are compositionally biased toward acidic residues. Basic and acidic residues-rich tracts occupy residues 287–296 (KEDKKEDIKK) and 303–323 (GKTE…DIEP). The Nuclear localization signal 1 motif lies at 289 to 296 (DKKEDIKK). Positions 489–496 (PKKSSPAA) match the Nuclear localization signal 2 motif. The span at 491–502 (KSSPAAGSSSSK) shows a compositional bias: low complexity. Positions 526–587 (DDESEEEKED…EESEEETKKK (62 aa)) form a coiled coil. Composition is skewed to acidic residues over residues 527–553 (DESE…EENE) and 560–582 (SEDE…ESEE). A Nuclear localization signal 3 motif is present at residues 618-625 (PKKATQKR). The span at 621-631 (ATQKRSAGKRK) shows a compositional bias: basic residues. Over residues 678-689 (KGKDKNKEPSDE) the composition is skewed to basic and acidic residues. The region spanning 685–740 (EPSDEELKTAIIDILKGVDFNTATFTDILKRLDAKFNISLASKKSSIKRMIQDELT) is the DEK-C domain. 2 DNA-binding regions span residues 703–717 (DFNT…KRLD) and 732–736 (KRMIQ). Positions 732-766 (KRMIQDELTKLADEAEDEEGEEEDAEHEEEEEKEK) form a coiled coil. The segment at 741–778 (KLADEAEDEEGEEEDAEHEEEEEKEKAKGSGGGEEVKA) is disordered. Acidic residues predominate over residues 745–763 (EAEDEEGEEEDAEHEEEEE). The span at 764–778 (KEKAKGSGGGEEVKA) shows a compositional bias: basic and acidic residues.

Interacts with DEK3.

It localises to the nucleus. It is found in the nucleolus. In terms of biological role, chromatin-associated protein which contributes to the modulation of chromatin structure (such as super-helical structure of DNA) and function. Binds to chromatin of protein-coding genes throughout the genome to regulate nucleosome occupancy and chromatin accessibility, and to modulate the expression of target genes. This Arabidopsis thaliana (Mouse-ear cress) protein is DEK domain-containing chromatin-associated protein 4.